The primary structure comprises 127 residues: Aspartate 1-decarboxylase (127 aa).

Residue S25 is the Schiff-base intermediate with substrate; via pyruvic acid of the active site. Pyruvic acid (Ser) is present on S25. T57 is a binding site for substrate. Catalysis depends on Y58, which acts as the Proton donor. 73–75 (GAA) lines the substrate pocket.

Belongs to the PanD family. In terms of assembly, heterooctamer of four alpha and four beta subunits. It depends on pyruvate as a cofactor. In terms of processing, is synthesized initially as an inactive proenzyme, which is activated by self-cleavage at a specific serine bond to produce a beta-subunit with a hydroxyl group at its C-terminus and an alpha-subunit with a pyruvoyl group at its N-terminus.

The protein localises to the cytoplasm. The enzyme catalyses L-aspartate + H(+) = beta-alanine + CO2. It participates in cofactor biosynthesis; (R)-pantothenate biosynthesis; beta-alanine from L-aspartate: step 1/1. Catalyzes the pyruvoyl-dependent decarboxylation of aspartate to produce beta-alanine. This chain is Aspartate 1-decarboxylase, found in Desulfitobacterium hafniense (strain DSM 10664 / DCB-2).